Consider the following 110-residue polypeptide: uncharacterized protein (110 aa).

This sequence to M.jannaschii MJ1213 and A.aeolicus AA15.

This is an uncharacterized protein from Methanocaldococcus jannaschii (strain ATCC 43067 / DSM 2661 / JAL-1 / JCM 10045 / NBRC 100440) (Methanococcus jannaschii).